Here is a 582-residue protein sequence, read N- to C-terminus: Semenogelin-2 (582 aa).

The N-terminal stretch at 1 to 23 (MKSIILFVLSLLLILEKQAAVMG) is a signal peptide. Disordered regions lie at residues 25–62 (KGGS…SKGS), 91–190 (HKTT…QGGS), and 272–553 (NLNQ…FSGA). The span at 50–59 (GQKDKQHTES) shows a compositional bias: basic and acidic residues. Residues 92 to 134 (KTTKSKQHLRRHQRLLNYKQKGRGRVKPKRHFHLIVIHRKGGQ) are compositionally biased toward basic residues. Composition is skewed to polar residues over residues 137–161 (HGTQ…QYSN) and 174–190 (EQAS…QGGS). The segment covering 293 to 305 (TEERQPNHEEKSV) has biased composition (basic and acidic residues). Residues 325–335 (KSQNQVTIPSQ) are compositionally biased toward polar residues. The span at 336–345 (DQEHGHKENK) shows a compositional bias: basic and acidic residues. Residues 385-395 (KSQNQVAIPSQ) show a composition bias toward polar residues. The span at 396–405 (DQEHGHKENK) shows a compositional bias: basic and acidic residues. Residues 445–455 (KSQNQVTIPSQ) are compositionally biased toward polar residues. Basic and acidic residues predominate over residues 456 to 465 (DQEHGHKENK). Composition is skewed to polar residues over residues 487–498 (KDVSQSSLSFQT) and 506–529 (SQIQ…NSGK). Residues 530–546 (SADRKQDLLSHEQEGRY) are compositionally biased toward basic and acidic residues.

This sequence belongs to the semenogelin family. In terms of assembly, interacts with SERPINA5.

Its subcellular location is the secreted. Participates in the formation of a gel matrix (sperm coagulum) entrapping the accessory gland secretions and ejaculated spermatozoa. This chain is Semenogelin-2 (SEMG2), found in Macaca fascicularis (Crab-eating macaque).